The sequence spans 346 residues: Tetraacyldisaccharide 4'-kinase (346 aa).

Residue 62-69 coordinates ATP; it reads TAGGTGKT.

This sequence belongs to the LpxK family.

The catalysed reaction is a lipid A disaccharide + ATP = a lipid IVA + ADP + H(+). Its pathway is glycolipid biosynthesis; lipid IV(A) biosynthesis; lipid IV(A) from (3R)-3-hydroxytetradecanoyl-[acyl-carrier-protein] and UDP-N-acetyl-alpha-D-glucosamine: step 6/6. Transfers the gamma-phosphate of ATP to the 4'-position of a tetraacyldisaccharide 1-phosphate intermediate (termed DS-1-P) to form tetraacyldisaccharide 1,4'-bis-phosphate (lipid IVA). This is Tetraacyldisaccharide 4'-kinase from Xanthomonas oryzae pv. oryzae (strain MAFF 311018).